Here is a 302-residue protein sequence, read N- to C-terminus: UDP-N-acetylenolpyruvoylglucosamine reductase (302 aa).

The 164-residue stretch at 29-192 folds into the FAD-binding PCMH-type domain; the sequence is KVGGPVDLLA…VAVTLQLSED (164 aa). Arginine 172 is a catalytic residue. Serine 221 (proton donor) is an active-site residue. Glutamate 291 is a catalytic residue.

It belongs to the MurB family. FAD is required as a cofactor.

It localises to the cytoplasm. It catalyses the reaction UDP-N-acetyl-alpha-D-muramate + NADP(+) = UDP-N-acetyl-3-O-(1-carboxyvinyl)-alpha-D-glucosamine + NADPH + H(+). Its pathway is cell wall biogenesis; peptidoglycan biosynthesis. Cell wall formation. This Trichlorobacter lovleyi (strain ATCC BAA-1151 / DSM 17278 / SZ) (Geobacter lovleyi) protein is UDP-N-acetylenolpyruvoylglucosamine reductase.